Here is a 382-residue protein sequence, read N- to C-terminus: 2-heptyl-3-hydroxy-4(1H)-quinolone synthase (382 aa).

It belongs to the 3-hydroxybenzoate 6-hydroxylase family.

It carries out the reaction 2-heptyl-4(1H)-quinolone + NADH + O2 + H(+) = 2-heptyl-3-hydroxy-4(1H)-quinolone + NAD(+) + H2O. Functionally, involved in the terminal step of the biosynthesis of quinolone which in addition to serve as a potent signal for quorum sensing, chelates iron and promotes the formation of membrane vesicles (MVs). Catalyzes the hydroxylation of 2-heptyl-4-quinolone (C7-HHQ) to yield 2-heptyl-3-hydroxy-4-quinolone (PQS). PqsH is also able to hydroxylate HHQ analogs having alkyl side-chain lengths of 3 (C3-HHQ), 5 (C5-HHQ) and 9 (C9-HHQ) carbons, however catalytic efficiencies are significantly reduced for substrates with alkyl side-chain lengths below 7 carbons. In Pseudomonas aeruginosa (strain UCBPP-PA14), this protein is 2-heptyl-3-hydroxy-4(1H)-quinolone synthase (pqsH).